A 468-amino-acid chain; its full sequence is 3-isopropylmalate dehydratase large subunit (468 aa).

C349, C409, and C412 together coordinate [4Fe-4S] cluster.

This sequence belongs to the aconitase/IPM isomerase family. LeuC type 1 subfamily. In terms of assembly, heterodimer of LeuC and LeuD. [4Fe-4S] cluster serves as cofactor.

The catalysed reaction is (2R,3S)-3-isopropylmalate = (2S)-2-isopropylmalate. It participates in amino-acid biosynthesis; L-leucine biosynthesis; L-leucine from 3-methyl-2-oxobutanoate: step 2/4. In terms of biological role, catalyzes the isomerization between 2-isopropylmalate and 3-isopropylmalate, via the formation of 2-isopropylmaleate. This chain is 3-isopropylmalate dehydratase large subunit, found in Jannaschia sp. (strain CCS1).